The chain runs to 72 residues: MYLTLQEWNARQRRPRSLETVRRWVRECRIFPPPVKDGREYLFHESAVKVDLNRPVTGGLLKRIRNGKKAKS.

In terms of assembly, interacts (via C-terminus) with the integrase (via N-terminus). Part of the excision complex made of the integrase tetramer, IHF, Fis and Xis.

Functionally, part of the excision complex necessary for the excision of prophage from the host genome by site-specific recombination at the att site. In Escherichia phage lambda (Bacteriophage lambda), this protein is Excisionase (xis).